We begin with the raw amino-acid sequence, 124 residues long: Small ribosomal subunit protein uS12 (124 aa).

A disordered region spans residues 1–32 (MPTIQQLVRKGRKDKATKTKTPALKGSPQRRG). 3-methylthioaspartic acid is present on Asp89. A disordered region spans residues 105–124 (QGVRGRQQARSRYGAKKEKK). Positions 111–124 (QQARSRYGAKKEKK) are enriched in basic residues.

It belongs to the universal ribosomal protein uS12 family. As to quaternary structure, part of the 30S ribosomal subunit. Contacts proteins S8 and S17. May interact with IF1 in the 30S initiation complex.

Functionally, with S4 and S5 plays an important role in translational accuracy. Interacts with and stabilizes bases of the 16S rRNA that are involved in tRNA selection in the A site and with the mRNA backbone. Located at the interface of the 30S and 50S subunits, it traverses the body of the 30S subunit contacting proteins on the other side and probably holding the rRNA structure together. The combined cluster of proteins S8, S12 and S17 appears to hold together the shoulder and platform of the 30S subunit. The chain is Small ribosomal subunit protein uS12 from Beutenbergia cavernae (strain ATCC BAA-8 / DSM 12333 / CCUG 43141 / JCM 11478 / NBRC 16432 / NCIMB 13614 / HKI 0122).